A 131-amino-acid polypeptide reads, in one-letter code: mRNA stability protein IGO2 (131 aa).

A compositionally biased stretch (polar residues) spans 1-13; the sequence is MSEDLSPTSSRVD. The tract at residues 1-26 is disordered; that stretch reads MSEDLSPTSSRVDLSNPHGFTKEGVD. At S2 the chain carries N-acetylserine. 4 positions are modified to phosphoserine: S6, S63, S108, and S119. A disordered region spans residues 81–131; it reads VNNSSNNLPVTNPSGLRESIIRRRMSSSSGGDSISRQGSISSGPPPRSPNK. A compositionally biased stretch (low complexity) spans 106–122; it reads SSSSGGDSISRQGSISS.

Belongs to the endosulfine family. Phosphorylated by RIM15.

The protein resides in the cytoplasm. It localises to the nucleus. In terms of biological role, required for TORC1 to properly control gene expression and chronological life span. Plays an essential role in initiation of the G0 program by preventing the degradation of specific nutrient-regulated mRNAs via the 5'-3' mRNA decay pathway. In Saccharomyces cerevisiae (strain ATCC 204508 / S288c) (Baker's yeast), this protein is mRNA stability protein IGO2 (IGO2).